A 696-amino-acid chain; its full sequence is Two-component response regulator ORR22 (696 aa).

Residues 27-142 (RVLAVDDDPV…ELRNIWQHVV (116 aa)) form the Response regulatory domain. Asp-78 is modified (4-aspartylphosphate). A disordered region spans residues 154-214 (LDFSKECNKP…DYQENDEPSA (61 aa)). Positions 176–185 (TCGSSDQNGR) are enriched in polar residues. Acidic residues predominate over residues 195–211 (GEDDDEGDDNDYQENDE). The segment at residues 214-273 (AAKKPRVVWSVELHRKFVAAVNQLGIDKAVPKRILELMNVEKLTRENVASHLQKYRLYLK) is a DNA-binding region (myb-like GARP).

Belongs to the ARR family. Type-B subfamily. Two-component system major event consists of a His-to-Asp phosphorelay between a sensor histidine kinase (HK) and a response regulator (RR). In plants, the His-to-Asp phosphorelay involves an additional intermediate named Histidine-containing phosphotransfer protein (HPt). This multistep phosphorelay consists of a His-Asp-His-Asp sequential transfer of a phosphate group between first a His and an Asp of the HK protein, followed by the transfer to a conserved His of the HPt protein and finally the transfer to an Asp in the receiver domain of the RR protein.

It localises to the nucleus. Functionally, transcriptional activator that binds specific DNA sequence. Functions as a response regulator involved in His-to-Asp phosphorelay signal transduction system. Phosphorylation of the Asp residue in the receiver domain activates the ability of the protein to promote the transcription of target genes. May directly activate some type-A response regulators in response to cytokinins. This chain is Two-component response regulator ORR22, found in Oryza sativa subsp. indica (Rice).